Reading from the N-terminus, the 391-residue chain is Putative gustatory receptor 36a (391 aa).

Over 1-3 (MFD) the chain is Cytoplasmic. A helical membrane pass occupies residues 4–24 (WVGLLLKVLYYYGQIIGLINF). At 25-38 (EIDWQRGRVVAAQR) the chain is on the extracellular side. A helical membrane pass occupies residues 39–59 (GILFAIAINVLICMVLLLQIS). Over 60-73 (KKFNLDVYFGRANQ) the chain is Cytoplasmic. A helical membrane pass occupies residues 74 to 94 (LHQYVIIVMVSLRMASGISAI). Residues 95-126 (LNRWRQRAQLMRLVECVLRLFLKKPHVKQMSR) lie on the Extracellular side of the membrane. A helical membrane pass occupies residues 127–147 (WAILVKFSVGVVSNFLQMAIS). The Cytoplasmic portion of the chain corresponds to 148 to 165 (MESLDRLGFNEFVGMASD). Residues 166-186 (FWMSAIINMAISQHYLVILFV) traverse the membrane as a helical segment. The Extracellular segment spans residues 187–247 (RAYYHLLKTE…LQSIVTQLNQ (61 aa)). Residues 248-268 (VFGIQGIMVYGGYYIFSVATT) traverse the membrane as a helical segment. At 269–290 (YITYSLAINGIEELHLSVRAAA) the chain is on the cytoplasmic side. The chain crosses the membrane as a helical span at residues 291-311 (LVFSWFLFYYTSAILNLFVML). Over 312–391 (KLFDDHKEME…FLIQYDMEYF (80 aa)) the chain is Extracellular.

It belongs to the insect chemoreceptor superfamily. Gustatory receptor (GR) family. Gr22e subfamily.

It is found in the cell membrane. In terms of biological role, probable gustatory receptor which mediates acceptance or avoidance behavior, depending on its substrates. The chain is Putative gustatory receptor 36a (Gr36a) from Drosophila melanogaster (Fruit fly).